The sequence spans 102 residues: Putative septation protein SpoVG 1 (102 aa).

It belongs to the SpoVG family.

Functionally, could be involved in septation. The polypeptide is Putative septation protein SpoVG 1 (Listeria monocytogenes serotype 4b (strain F2365)).